Here is a 194-residue protein sequence, read N- to C-terminus: Thymidine kinase (194 aa).

Residues 15 to 22 (GCMFSGKT) and 88 to 91 (DELH) each bind ATP. The active-site Proton acceptor is E89. C148, C151, C186, and C189 together coordinate Zn(2+).

This sequence belongs to the thymidine kinase family. As to quaternary structure, homotetramer.

It is found in the cytoplasm. The enzyme catalyses thymidine + ATP = dTMP + ADP + H(+). The protein is Thymidine kinase of Roseiflexus castenholzii (strain DSM 13941 / HLO8).